Here is a 179-residue protein sequence, read N- to C-terminus: Replication restart protein DnaT (179 aa).

Over residues 151 to 168 the composition is skewed to polar residues; it reads SRSSNGGMPQRDINSVSE. Residues 151 to 179 form a disordered region; that stretch reads SRSSNGGMPQRDINSVSEPDNHIPPGFRG.

Belongs to the DnaT family. Homooligomerizes. Interacts with PriB. Component of the replication restart primosome. Primosome assembly occurs via a 'hand-off' mechanism. PriA binds to replication forks, subsequently PriB then DnaT bind; DnaT then displaces ssDNA to generate the helicase loading substrate.

In terms of biological role, involved in the restart of stalled replication forks, which reloads the replicative helicase on sites other than the origin of replication. Can function in multiple replication restart pathways. Displaces ssDNA from a PriB-ssDNA complex. Probably forms a spiral filament on ssDNA. The polypeptide is Replication restart protein DnaT (Salmonella schwarzengrund (strain CVM19633)).